Reading from the N-terminus, the 90-residue chain is Small ribosomal subunit protein bS20 (90 aa).

The disordered stretch occupies residues 1–25 (MANSPSAKKRAKQAEKRRSHNASLR). Over residues 7–20 (AKKRAKQAEKRRSH) the composition is skewed to basic residues.

It belongs to the bacterial ribosomal protein bS20 family.

Functionally, binds directly to 16S ribosomal RNA. This is Small ribosomal subunit protein bS20 from Pseudomonas fluorescens (strain Pf0-1).